We begin with the raw amino-acid sequence, 75 residues long: MSLINSHQSADSGLNIWSQLFFYTIVTASEWIGGLQKRRKGKGNGEILYEIIGRKLSLCFIRLSFLADIEVALVE.

This is an uncharacterized protein from Bacillus subtilis (strain 168).